We begin with the raw amino-acid sequence, 173 residues long: Large ribosomal subunit protein bL12m (173 aa).

A mitochondrion-targeting transit peptide spans 1 to 33 (MFRIASRQTRNLRALSSSKNWARSLVNTRSFRA).

Belongs to the bacterial ribosomal protein bL12 family. As to quaternary structure, component of the mitochondrial large ribosomal subunit (mt-LSU). Mature yeast 74S mitochondrial ribosomes consist of a small (37S) and a large (54S) subunit. The 37S small subunit contains a 15S ribosomal RNA (15S mt-rRNA) and at least 32 different proteins. The 54S large subunit contains a 21S rRNA (21S mt-rRNA) and at least 45 different proteins.

The protein localises to the mitochondrion. In terms of biological role, component of the mitochondrial ribosome (mitoribosome), a dedicated translation machinery responsible for the synthesis of mitochondrial genome-encoded proteins, including at least some of the essential transmembrane subunits of the mitochondrial respiratory chain. The mitoribosomes are attached to the mitochondrial inner membrane and translation products are cotranslationally integrated into the membrane. The polypeptide is Large ribosomal subunit protein bL12m (mrpl12) (Schizosaccharomyces pombe (strain 972 / ATCC 24843) (Fission yeast)).